A 736-amino-acid polypeptide reads, in one-letter code: Glycogen [starch] synthase, muscle (736 aa).

S8 carries the post-translational modification Phosphoserine; by AMPK and PKA. S11 carries the post-translational modification Phosphoserine. K39 provides a ligand contact to UDP. UDP-alpha-D-glucose contacts are provided by H205 and R211. The alpha-D-glucose 6-phosphate site is built by H291, E292, Q294, H297, and K301. UDP is bound at residue R331. Residue R331 coordinates UDP-alpha-D-glucose. The residue at position 412 (S412) is a Phosphoserine. Residue H501 participates in alpha-D-glucose 6-phosphate binding. UDP-alpha-D-glucose-binding residues include E510, W512, and G513. T515 is a binding site for UDP. Alpha-D-glucose 6-phosphate-binding residues include R582 and R586. Residues 631–736 (TQGYRYPRPA…PASSLGEERN (106 aa)) are disordered. Residue S641 is modified to Phosphoserine; by DYRK2, GSK3-alpha, GSK3-beta and PASK. A phosphoserine; by GSK3-alpha and GSK3-beta mark is found at S645 and S649. The residue at position 652 (S652) is a Phosphoserine. Phosphoserine; by GSK3-alpha and GSK3-beta is present on S653. S657 carries the phosphoserine; by CK2 modification. Positions 658 to 681 (EDEEEPRDLPPDEDDERYDEDEEA) are enriched in acidic residues. A compositionally biased stretch (basic and acidic residues) spans 682-695 (AKDRRNIRAPEWPR). Position 698 is a phosphoserine (S698). T700 bears the Phosphothreonine mark. A Phosphoserine modification is found at S709. Residues 714-727 (PSSSVSTPSEPLSP) show a composition bias toward low complexity. T720 carries the post-translational modification Phosphothreonine. Residues S726 and S730 each carry the phosphoserine modification.

It belongs to the glycosyltransferase 3 family. As to quaternary structure, part of the GYS1-GYG1 complex, a heterooctamer composed of a tetramer of GYS1 and 2 dimers of GYG1, where each GYS1 protomer binds to one GYG1 subunit (via GYG1 C-terminus); the GYS1 tetramer may dissociate from GYG1 dimers to continue glycogen polymerization on its own. Post-translationally, phosphorylation at Ser-8 by AMPK inactivates the enzyme activity. Primed phosphorylation at Ser-657 (site 5) by CSNK2A1 and CSNK2A2 is required for inhibitory phosphorylation at Ser-641 (site 3a), Ser-645 (site 3b), Ser-649 (site 3c) and Ser-653 (site 4) by GSK3A an GSK3B. Phosphorylated at Ser-641 by PASK, leading to inactivation; phosphorylation by PASK is inhibited by glycogen. Phosphorylated at Ser-641 by DYRK2, leading to inactivation. Dephosphorylation at Ser-641 and Ser-645 by PP1 activates the enzyme.

It catalyses the reaction [(1-&gt;4)-alpha-D-glucosyl](n) + UDP-alpha-D-glucose = [(1-&gt;4)-alpha-D-glucosyl](n+1) + UDP + H(+). Its pathway is glycan biosynthesis; glycogen biosynthesis. Its activity is regulated as follows. Allosteric activation by glucose-6-phosphate. Phosphorylation reduces the activity towards UDP-glucose. When in the non-phosphorylated state, glycogen synthase does not require glucose-6-phosphate as an allosteric activator; when phosphorylated it does. Its function is as follows. Glycogen synthase participates in the glycogen biosynthetic process along with glycogenin and glycogen branching enzyme. Extends the primer composed of a few glucose units formed by glycogenin by adding new glucose units to it. In this context, glycogen synthase transfers the glycosyl residue from UDP-Glc to the non-reducing end of alpha-1,4-glucan. In Bos taurus (Bovine), this protein is Glycogen [starch] synthase, muscle (GYS1).